The primary structure comprises 185 residues: ATP synthase subunit delta (185 aa).

It belongs to the ATPase delta chain family. F-type ATPases have 2 components, F(1) - the catalytic core - and F(0) - the membrane proton channel. F(1) has five subunits: alpha(3), beta(3), gamma(1), delta(1), epsilon(1). F(0) has three main subunits: a(1), b(2) and c(10-14). The alpha and beta chains form an alternating ring which encloses part of the gamma chain. F(1) is attached to F(0) by a central stalk formed by the gamma and epsilon chains, while a peripheral stalk is formed by the delta and b chains.

It localises to the cell inner membrane. In terms of biological role, f(1)F(0) ATP synthase produces ATP from ADP in the presence of a proton or sodium gradient. F-type ATPases consist of two structural domains, F(1) containing the extramembraneous catalytic core and F(0) containing the membrane proton channel, linked together by a central stalk and a peripheral stalk. During catalysis, ATP synthesis in the catalytic domain of F(1) is coupled via a rotary mechanism of the central stalk subunits to proton translocation. This protein is part of the stalk that links CF(0) to CF(1). It either transmits conformational changes from CF(0) to CF(1) or is implicated in proton conduction. This chain is ATP synthase subunit delta, found in Pelagibacter ubique (strain HTCC1062).